The following is a 399-amino-acid chain: MSKAKFERTKPHVNIGTIGHVDHGKTTLTAAITQTMAARGLAEFKAFDQIDNAPEERERGITIATAHVEYQTDTRHYAHVDCPGHADYVKNMITGAAQMDGAILVVSAADGPMPQTREHILLARQVGVPAMVVFLNKADMVDDEELMELVELEVRELLSSYDFPGDDIPIVAGSALKALECGCGKDDCDACKPIIELMNQVDGYIPEPERDIDKPFLMPVEDVFSISGRGTVATGRVERGIVCVQDEIEIVGMKETTKTVVTGVEMFRKLLDQGQAGDNIGVLLRGVKREDIERGQVLAKPGSITPHTKFKAEAYILTKEEGGRHTPFFNGYRPQFYFRTTDVTGICELAEGTEMVMPGDNASMTVNLITPIAMDKELRFAIREGGRTVGAGVVSDIIE.

In terms of domain architecture, tr-type G spans 10-209; that stretch reads KPHVNIGTIG…QVDGYIPEPE (200 aa). The segment at 19–26 is G1; sequence GHVDHGKT. Residue 19–26 coordinates GTP; that stretch reads GHVDHGKT. A Mg(2+)-binding site is contributed by T26. Residues 60–64 are G2; that stretch reads GITIA. The segment at 81–84 is G3; it reads DCPG. Residues 81–85 and 136–139 each bind GTP; these read DCPGH and NKAD. The tract at residues 136–139 is G4; sequence NKAD. The interval 174 to 176 is G5; it reads SAL.

It belongs to the TRAFAC class translation factor GTPase superfamily. Classic translation factor GTPase family. EF-Tu/EF-1A subfamily. Monomer.

It is found in the cytoplasm. The catalysed reaction is GTP + H2O = GDP + phosphate + H(+). In terms of biological role, GTP hydrolase that promotes the GTP-dependent binding of aminoacyl-tRNA to the A-site of ribosomes during protein biosynthesis. This Syntrophotalea carbinolica (strain DSM 2380 / NBRC 103641 / GraBd1) (Pelobacter carbinolicus) protein is Elongation factor Tu 2.